Here is a 350-residue protein sequence, read N- to C-terminus: Nicotinate-nucleotide--dimethylbenzimidazole phosphoribosyltransferase (350 aa).

The active-site Proton acceptor is the E316.

This sequence belongs to the CobT family.

The catalysed reaction is 5,6-dimethylbenzimidazole + nicotinate beta-D-ribonucleotide = alpha-ribazole 5'-phosphate + nicotinate + H(+). The protein operates within nucleoside biosynthesis; alpha-ribazole biosynthesis; alpha-ribazole from 5,6-dimethylbenzimidazole: step 1/2. Catalyzes the synthesis of alpha-ribazole-5'-phosphate from nicotinate mononucleotide (NAMN) and 5,6-dimethylbenzimidazole (DMB). The polypeptide is Nicotinate-nucleotide--dimethylbenzimidazole phosphoribosyltransferase (Pseudomonas syringae pv. tomato (strain ATCC BAA-871 / DC3000)).